A 237-amino-acid polypeptide reads, in one-letter code: Phosphatidylserine decarboxylase proenzyme (237 aa).

Catalysis depends on Ser-206, which acts as the Schiff-base intermediate with substrate; via pyruvic acid. Position 206 is a pyruvic acid (Ser); by autocatalysis (Ser-206).

This sequence belongs to the phosphatidylserine decarboxylase family. PSD-A subfamily. In terms of assembly, heterodimer of a large membrane-associated beta subunit and a small pyruvoyl-containing alpha subunit. The cofactor is pyruvate. In terms of processing, is synthesized initially as an inactive proenzyme. Formation of the active enzyme involves a self-maturation process in which the active site pyruvoyl group is generated from an internal serine residue via an autocatalytic post-translational modification. Two non-identical subunits are generated from the proenzyme in this reaction, and the pyruvate is formed at the N-terminus of the alpha chain, which is derived from the carboxyl end of the proenzyme. The post-translation cleavage follows an unusual pathway, termed non-hydrolytic serinolysis, in which the side chain hydroxyl group of the serine supplies its oxygen atom to form the C-terminus of the beta chain, while the remainder of the serine residue undergoes an oxidative deamination to produce ammonia and the pyruvoyl prosthetic group on the alpha chain.

The protein localises to the cell membrane. The enzyme catalyses a 1,2-diacyl-sn-glycero-3-phospho-L-serine + H(+) = a 1,2-diacyl-sn-glycero-3-phosphoethanolamine + CO2. It participates in phospholipid metabolism; phosphatidylethanolamine biosynthesis; phosphatidylethanolamine from CDP-diacylglycerol: step 2/2. Functionally, catalyzes the formation of phosphatidylethanolamine (PtdEtn) from phosphatidylserine (PtdSer). This Rhodococcus erythropolis (strain PR4 / NBRC 100887) protein is Phosphatidylserine decarboxylase proenzyme.